The following is a 525-amino-acid chain: MELGPEPPHRRRLLFACSPPPAPQPVVKALFGTPAAGGLSPVTNLTVTMDQLQGLGSEYEQPIEVKNSSLQRMGSSESTDSGFCLDSPGPLDSKENLENPMRRINSLPQKLLGCSPALKRSHSDSLDHDVFQLIDQDENKENQVFEFKKPIRPASRGCLHVHGLEEGKDVFTQRQNSAPARMLSSNERDGNEPGNSIPFMPQSPVTPTLSDEDDGFMDLLDGENLKNDEETPSCMASLWTAPLVMRRTNNLGNRCKLFDSPSASCSSTIRSMLKRPDRSLEESPGGSRKRRKSVAGASPEEAASPEKPQEILHHQSLSLASSPKGTIENILDNDPRDLIGDFSKGYLFHTVAGKHQDLKYISPEIITSVLNGKFANLIKEFVIIDCRYPYEYEGGHIKGAVNLHMEEEVEEFLLKKPIVPTDGKRVIVVFHCEFSSERGPRMCRYVRERDRLGNEYPKLHYPELYVLKGGYKEFFLKCQSHCEPPSYRPMHHEDFKEDLKKFRTKSRTWAGEKSKREMYSRLKKL.

The short motif at 73-83 (MGSSESTDSGF) is the Phosphodegron element. The residue at position 75 (serine 75) is a Phosphoserine; by CHEK1. Phosphoserine; by NEK11 occurs at positions 78, 81, and 87. Serine 106 is subject to Phosphoserine. Serine 123 carries the post-translational modification Phosphoserine; by CHEK1 and CHEK2. The KEN box motif lies at 140–142 (KEN). Position 177 is a phosphoserine; by CHEK1 (serine 177). Disordered regions lie at residues 179–204 (PARM…PQSP) and 262–308 (SASC…PEKP). Serine 279 and serine 293 each carry phosphoserine; by CHEK1 and CHEK2. The span at 294-306 (VAGASPEEAASPE) shows a compositional bias: low complexity. Position 322 is a phosphoserine (serine 322). The region spanning 377–483 (LIKEFVIIDC…FFLKCQSHCE (107 aa)) is the Rhodanese domain. Residue cysteine 432 is part of the active site. At threonine 508 the chain carries Phosphothreonine; by CHEK1. Serine 514 and serine 520 each carry phosphoserine; by PLK3.

This sequence belongs to the MPI phosphatase family. As to quaternary structure, interacts with CCNB1/cyclin B1. Interacts with YWHAE/14-3-3 epsilon when phosphorylated. Interacts with CUL1 specifically when CUL1 is neddylated and active. Interacts with BTRC/BTRCP1 and FBXW11/BTRCP2. Interactions with CUL1, BTRC and FBXW11 are enhanced upon DNA damage. Interacts with HSP90AB1; prevents heat shock-mediated CDC25A degradation and contributes to cell cycle progression. In terms of processing, phosphorylated by CHEK1 on Ser-75, Ser-123, Ser-177, Ser-279, Ser-293 and Thr-508 during checkpoint mediated cell cycle arrest. Also phosphorylated by CHEK2 on Ser-123, Ser-279, and Ser-293 during checkpoint mediated cell cycle arrest. Phosphorylation on Ser-177 and Thr-508 creates binding sites for YWHAE/14-3-3 epsilon which inhibits CDC25A. Phosphorylation on Ser-75, Ser-123, Ser-177, Ser-279 and Ser-293 may also promote ubiquitin-dependent proteolysis of CDC25A by the SCF complex. Phosphorylation of CDC25A at Ser-75 by CHEK1 primes it for subsequent phosphorylation at Ser-78, Ser-81 and Ser-87 by NEK11. Phosphorylation by NEK11 is required for BTRC-mediated polyubiquitination and degradation. Phosphorylation by PIM1 leads to an increase in phosphatase activity. Phosphorylated by PLK3 following DNA damage, leading to promote its ubiquitination and degradation. Post-translationally, ubiquitinated by the anaphase promoting complex/cyclosome (APC/C) ubiquitin ligase complex that contains FZR1/CDH1 during G1 phase leading to its degradation by the proteasome. Ubiquitinated by a SCF complex containing BTRC and FBXW11 during S phase leading to its degradation by the proteasome. Deubiquitination by USP17L2/DUB3 leads to its stabilization.

It carries out the reaction O-phospho-L-tyrosyl-[protein] + H2O = L-tyrosyl-[protein] + phosphate. Its activity is regulated as follows. Stimulated by B-type cyclins. Stimulated by PIM1-mediated phosphorylation. Tyrosine protein phosphatase which functions as a dosage-dependent inducer of mitotic progression. Directly dephosphorylates CDK1 and stimulates its kinase activity. Also dephosphorylates CDK2 in complex with cyclin-E, in vitro. In Bos taurus (Bovine), this protein is M-phase inducer phosphatase 1 (CDC25A).